Reading from the N-terminus, the 216-residue chain is Adenylate kinase (216 aa).

10–15 (GAGKGT) provides a ligand contact to ATP. The NMP stretch occupies residues 30 to 59 (STGDIFRAHMSQGTPLGKLAKEYVDAGKYV). AMP contacts are provided by residues Thr-31, Arg-36, 57 to 59 (KYV), 85 to 88 (GYPR), and Gln-92. The segment at 126–163 (GRRVCRSCGATYHVRFNPPREAGRCDRCGGELYQRSDD) is LID. Arg-127 is an ATP binding site. Zn(2+) contacts are provided by Cys-130 and Cys-133. 136–137 (TY) is an ATP binding site. Zn(2+) contacts are provided by Cys-150 and Cys-153. AMP-binding residues include Arg-160 and Arg-171. Gln-199 lines the ATP pocket.

It belongs to the adenylate kinase family. In terms of assembly, monomer.

It localises to the cytoplasm. The enzyme catalyses AMP + ATP = 2 ADP. It participates in purine metabolism; AMP biosynthesis via salvage pathway; AMP from ADP: step 1/1. Functionally, catalyzes the reversible transfer of the terminal phosphate group between ATP and AMP. Plays an important role in cellular energy homeostasis and in adenine nucleotide metabolism. This chain is Adenylate kinase, found in Symbiobacterium thermophilum (strain DSM 24528 / JCM 14929 / IAM 14863 / T).